The chain runs to 279 residues: 2-dehydro-3-deoxyphosphooctonate aldolase (279 aa).

Belongs to the KdsA family.

It localises to the cytoplasm. The enzyme catalyses D-arabinose 5-phosphate + phosphoenolpyruvate + H2O = 3-deoxy-alpha-D-manno-2-octulosonate-8-phosphate + phosphate. It participates in carbohydrate biosynthesis; 3-deoxy-D-manno-octulosonate biosynthesis; 3-deoxy-D-manno-octulosonate from D-ribulose 5-phosphate: step 2/3. It functions in the pathway bacterial outer membrane biogenesis; lipopolysaccharide biosynthesis. This Bartonella henselae (strain ATCC 49882 / DSM 28221 / CCUG 30454 / Houston 1) (Rochalimaea henselae) protein is 2-dehydro-3-deoxyphosphooctonate aldolase.